A 586-amino-acid chain; its full sequence is Estrogen receptor (586 aa).

The interval 1-179 (MTMPLPNKTT…SMESTKETRY (179 aa)) is modulating. A disordered region spans residues 144–173 (FYRSSSDNRRQSGRERMSSANDKGPPSMES). The span at 149–160 (SDNRRQSGRERM) shows a compositional bias: basic and acidic residues. 2 NR C4-type zinc fingers span residues 180–200 (CAVC…CEGC) and 216–240 (CPAT…LRKC). A DNA-binding region (nuclear receptor) is located at residues 180-245 (CAVCSDYASG…RLRKCYEVGM (66 aa)). The segment at 246–302 (MKGGIRKDRRGGRLLKHKRQKEEQEQKNDVDPSEIRTASIWVNPSVKSMKLSPVLSL) is hinge. A compositionally biased stretch (basic residues) spans 252-264 (KDRRGGRLLKHKR). Residues 252–276 (KDRRGGRLLKHKRQKEEQEQKNDVD) form a disordered region. Over residues 265 to 276 (QKEEQEQKNDVD) the composition is skewed to basic and acidic residues. The 237-residue stretch at 303–539 (TAEQLISALM…DLLLEMLDAH (237 aa)) folds into the NR LBD domain. Basic and acidic residues predominate over residues 543–556 (TPKDKTTTQEEDSR). The disordered stretch occupies residues 543–569 (TPKDKTTTQEEDSRSPPTTTVNGASPC).

This sequence belongs to the nuclear hormone receptor family. NR3 subfamily. Binds DNA as a homodimer. Can form a heterodimer with ER-beta.

It is found in the nucleus. Functionally, the steroid hormones and their receptors are involved in the regulation of eukaryotic gene expression and affect cellular proliferation and differentiation in target tissues. The sequence is that of Estrogen receptor (esr1) from Xenopus laevis (African clawed frog).